The sequence spans 349 residues: tRNA pseudouridine synthase D (349 aa).

Phe27 is a binding site for substrate. Asp80 serves as the catalytic Nucleophile. Asn129 is a substrate binding site. In terms of domain architecture, TRUD spans 155-303 (GVPNYFGAQR…VEAARRAMLL (149 aa)). Phe329 contributes to the substrate binding site.

This sequence belongs to the pseudouridine synthase TruD family.

The catalysed reaction is uridine(13) in tRNA = pseudouridine(13) in tRNA. Its function is as follows. Responsible for synthesis of pseudouridine from uracil-13 in transfer RNAs. The polypeptide is tRNA pseudouridine synthase D (Shigella boydii serotype 4 (strain Sb227)).